The following is a 508-amino-acid chain: Small ribosomal subunit protein mS47 (508 aa).

This sequence belongs to the enoyl-CoA hydratase/isomerase family. Mitochondrion-specific ribosomal protein mS47 subfamily. In terms of assembly, component of the mitochondrial small ribosomal subunit (mt-SSU). Mature N.crassa 74S mitochondrial ribosomes consist of a small (37S) and a large (54S) subunit. The 37S small subunit contains a 16S ribosomal RNA (16S mt-rRNA) and 32 different proteins. The 54S large subunit contains a 23S rRNA (23S mt-rRNA) and 42 different proteins. mS47 forms a protuberance of the N.crassa mitoribosome and retains a solvent-exposed cavity liekly capable of accommodating a substrate, in accordance with it being an active enzyme as well as an integral constituent of the mitoribosome.

The protein resides in the mitochondrion. It catalyses the reaction 3-hydroxy-2-methylpropanoyl-CoA + H2O = 3-hydroxy-2-methylpropanoate + CoA + H(+). Its function is as follows. Component of the mitochondrial ribosome (mitoribosome), a dedicated translation machinery responsible for the synthesis of mitochondrial genome-encoded proteins, including at least some of the essential transmembrane subunits of the mitochondrial respiratory chain. The mitoribosomes are attached to the mitochondrial inner membrane and translation products are cotranslationally integrated into the membrane. mS47 has enzymatic activity in vitro, and is able to catalyze the specific hydrolysis of 3-hydroxyisobutyryl-CoA (HIBYL-CoA). However, because the turnover rate of mS47 is only a fraction of that of the homologous mammalian enzyme, the physiological function of this activity remains unclear. The polypeptide is Small ribosomal subunit protein mS47 (ehd3) (Neurospora crassa (strain ATCC 24698 / 74-OR23-1A / CBS 708.71 / DSM 1257 / FGSC 987)).